The sequence spans 508 residues: Steroid 17-alpha-hydroxylase/17,20 lyase (508 aa).

Position 202 (asparagine 202) interacts with substrate. Cysteine 442 lines the heme pocket.

The protein belongs to the cytochrome P450 family. Heme serves as cofactor.

It is found in the endoplasmic reticulum membrane. Its subcellular location is the microsome membrane. The enzyme catalyses a C21-steroid + reduced [NADPH--hemoprotein reductase] + O2 = a 17alpha-hydroxy-C21-steroid + oxidized [NADPH--hemoprotein reductase] + H2O + H(+). It carries out the reaction progesterone + reduced [NADPH--hemoprotein reductase] + O2 = 17alpha-hydroxyprogesterone + oxidized [NADPH--hemoprotein reductase] + H2O + H(+). The catalysed reaction is pregnenolone + reduced [NADPH--hemoprotein reductase] + O2 = 17alpha-hydroxypregnenolone + oxidized [NADPH--hemoprotein reductase] + H2O + H(+). It catalyses the reaction 17alpha-hydroxyprogesterone + reduced [NADPH--hemoprotein reductase] + O2 = androst-4-ene-3,17-dione + acetate + oxidized [NADPH--hemoprotein reductase] + H2O + 2 H(+). The enzyme catalyses 17alpha-hydroxyprogesterone + reduced [NADPH--hemoprotein reductase] + O2 = 16alpha,17alpha-dihydroxyprogesterone + oxidized [NADPH--hemoprotein reductase] + H2O + H(+). It carries out the reaction 16alpha,17alpha-dihydroxyprogesterone + reduced [NADPH--hemoprotein reductase] + O2 = 6beta,16alpha,17alpha-trihydroxyprogesterone + oxidized [NADPH--hemoprotein reductase] + H2O + H(+). The catalysed reaction is 17alpha-hydroxypregnenolone + reduced [NADPH--hemoprotein reductase] + O2 = 3beta-hydroxyandrost-5-en-17-one + acetate + oxidized [NADPH--hemoprotein reductase] + H2O + 2 H(+). It catalyses the reaction 16alpha,17alpha-dihydroxypregnenolone + reduced [NADPH--hemoprotein reductase] + O2 = 3beta,16alpha-dihydroxy-androst-5-en-17-one + acetate + oxidized [NADPH--hemoprotein reductase] + H2O + 2 H(+). The enzyme catalyses 3beta-hydroxyandrost-5-en-17-one + reduced [NADPH--hemoprotein reductase] + O2 = 3beta,16alpha-dihydroxy-androst-5-en-17-one + oxidized [NADPH--hemoprotein reductase] + H2O + H(+). It carries out the reaction androst-4-ene-3,17-dione + reduced [NADPH--hemoprotein reductase] + O2 = 16alpha-hydroxyandrost-4-ene-3,17-dione + oxidized [NADPH--hemoprotein reductase] + H2O + H(+). It functions in the pathway steroid hormone biosynthesis. It participates in steroid biosynthesis; glucocorticoid biosynthesis. Its activity is regulated as follows. Regulated predominantly by intracellular cAMP levels. The 17,20-lyase activity is stimulated by cytochrome b5, which acts as an allosteric effector increasing the Vmax of the lyase activity. In terms of biological role, a cytochrome P450 monooxygenase involved in corticoid and androgen biosynthesis. Catalyzes 17-alpha hydroxylation of C21 steroids, which is common for both pathways. A second oxidative step, required only for androgen synthesis, involves an acyl-carbon cleavage. The 17-alpha hydroxy intermediates, as part of adrenal glucocorticoids biosynthesis pathway, are precursors of cortisol. Hydroxylates steroid hormones, pregnenolone and progesterone to form 17-alpha hydroxy metabolites, followed by the cleavage of the C17-C20 bond to form C19 steroids, dehydroepiandrosterone (DHEA) and androstenedione. Has 16-alpha hydroxylase activity. Catalyzes 16-alpha hydroxylation of 17-alpha hydroxy pregnenolone, followed by the cleavage of the C17-C20 bond to form 16-alpha-hydroxy DHEA. Also 16-alpha hydroxylates androgens, relevant for estriol synthesis. Mechanistically, uses molecular oxygen inserting one oxygen atom into a substrate, and reducing the second into a water molecule, with two electrons provided by NADPH via cytochrome P450 reductase (CPR; NADPH-ferrihemoprotein reductase). This Papio cynocephalus (Yellow baboon) protein is Steroid 17-alpha-hydroxylase/17,20 lyase (CYP17A1).